The following is a 96-amino-acid chain: Glutamyl-tRNA(Gln) amidotransferase subunit C (96 aa).

It belongs to the GatC family. As to quaternary structure, heterotrimer of A, B and C subunits.

The enzyme catalyses L-glutamyl-tRNA(Gln) + L-glutamine + ATP + H2O = L-glutaminyl-tRNA(Gln) + L-glutamate + ADP + phosphate + H(+). It carries out the reaction L-aspartyl-tRNA(Asn) + L-glutamine + ATP + H2O = L-asparaginyl-tRNA(Asn) + L-glutamate + ADP + phosphate + 2 H(+). In terms of biological role, allows the formation of correctly charged Asn-tRNA(Asn) or Gln-tRNA(Gln) through the transamidation of misacylated Asp-tRNA(Asn) or Glu-tRNA(Gln) in organisms which lack either or both of asparaginyl-tRNA or glutaminyl-tRNA synthetases. The reaction takes place in the presence of glutamine and ATP through an activated phospho-Asp-tRNA(Asn) or phospho-Glu-tRNA(Gln). This is Glutamyl-tRNA(Gln) amidotransferase subunit C from Nostoc sp. (strain PCC 7120 / SAG 25.82 / UTEX 2576).